The following is a 381-amino-acid chain: Transaldolase 1 (381 aa).

Lys-149 acts as the Schiff-base intermediate with substrate in catalysis.

This sequence belongs to the transaldolase family. Type 2 subfamily.

The protein localises to the cytoplasm. The enzyme catalyses D-sedoheptulose 7-phosphate + D-glyceraldehyde 3-phosphate = D-erythrose 4-phosphate + beta-D-fructose 6-phosphate. The protein operates within carbohydrate degradation; pentose phosphate pathway; D-glyceraldehyde 3-phosphate and beta-D-fructose 6-phosphate from D-ribose 5-phosphate and D-xylulose 5-phosphate (non-oxidative stage): step 2/3. In terms of biological role, transaldolase is important for the balance of metabolites in the pentose-phosphate pathway. The sequence is that of Transaldolase 1 (tal1) from Streptomyces coelicolor (strain ATCC BAA-471 / A3(2) / M145).